The chain runs to 195 residues: U8 snoRNA-decapping enzyme (195 aa).

A Nudix hydrolase domain is found at 18 to 173 (DWRHACHALL…IGAAREQLLE (156 aa)). Substrate is bound by residues histidine 24, arginine 50, and phenylalanine 57. Residues glycine 59, glutamate 76, glutamate 80, and histidine 99 each coordinate Mn(2+). Positions 61 to 82 (FVDAQDSCLEDGLNRELREELG) match the Nudix box motif. Glutamine 170 serves as a coordination point for substrate. Glutamate 173 is a binding site for Mn(2+).

This sequence belongs to the Nudix hydrolase family. NUDT16 subfamily. As to quaternary structure, homodimer. Mg(2+) is required as a cofactor. It depends on Mn(2+) as a cofactor. The cofactor is Co(2+). Expressed in brain, testis, spleen, lung, heart, liver, kidney and muscle (at protein level).

It is found in the nucleus. Its subcellular location is the nucleolus. The protein resides in the nucleoplasm. It localises to the cytoplasm. It carries out the reaction a 5'-end (N(7)-methyl 5'-triphosphoguanosine)-ribonucleoside in mRNA + H2O = N(7)-methyl-GDP + a 5'-end phospho-ribonucleoside in mRNA + 2 H(+). It catalyses the reaction IDP + H2O = IMP + phosphate + H(+). The catalysed reaction is dIDP + H2O = dIMP + phosphate + H(+). The enzyme catalyses a 5'-end NAD(+)-phospho-ribonucleoside in mRNA + H2O = a 5'-end phospho-ribonucleoside in mRNA + NAD(+) + H(+). It carries out the reaction a 5'-end FAD-phospho-ribonucleoside in mRNA + H2O = a 5'-end phospho-adenosine-phospho-ribonucleoside in mRNA + FMN + 2 H(+). It catalyses the reaction a 5'-end CoA-ribonucleoside in mRNA + H2O = a 5'-end phospho-adenosine-phospho-ribonucleoside in mRNA + (R)-4'-phosphopantetheine + 2 H(+). In terms of biological role, RNA-binding and decapping enzyme that catalyzes the cleavage of the cap structure of snoRNAs and mRNAs in a metal-dependent manner. Part of the U8 snoRNP complex that is required for the accumulation of mature 5.8S and 28S rRNA. Has diphosphatase activity and removes m7G and/or m227G caps from U8 snoRNA and leaves a 5'monophosphate on the RNA. Also catalyzes the cleavage of the cap structure on mRNAs. Does not hydrolyze cap analog structures like 7-methylguanosine nucleoside triphosphate (m7GpppG). Also hydrolysis m7G- and m227G U3-capped RNAs but with less efficiencies. Has broad substrate specificity with manganese or cobalt as cofactor and can act on various RNA species. Binds to the U8 snoRNA; metal is not required for RNA-binding. May play a role in the regulation of snoRNAs and mRNAs degradation. Also acts as a phosphatase; hydrolyzes the non-canonical purine nucleotides inosine diphosphate (IDP) and deoxyinosine diphosphate (dITP) as well as guanosine diphosphate (GDP), deoxyguanosine diphosphate (dGDP), xanthine diphosphate (XDP), inosine triphosphate (ITP) and deoxyinosine triphosphate (ITP) to their respective monophosphate derivatives and does not distinguish between the deoxy- and ribose forms. The order of activity with different substrates is IDP &gt; dIDP &gt;&gt; GDP = dGDP &gt; XDP = ITP = dITP. Binds strongly to GTP, ITP and XTP. Participates in the hydrolysis of dIDP/IDP and probably excludes non-canonical purines from RNA and DNA precursor pools, thus preventing their incorporation into RNA and DNA and avoiding chromosomal lesions. Exhibits decapping activity towards NAD-capped RNAs and FAD-capped RNAs. Exhibits decapping activity towards dpCoA-capped RNAs in vitro. This chain is U8 snoRNA-decapping enzyme (Nudt16), found in Mus musculus (Mouse).